Consider the following 180-residue polypeptide: Large ribosomal subunit protein uL5 (180 aa).

This sequence belongs to the universal ribosomal protein uL5 family. In terms of assembly, part of the 50S ribosomal subunit; part of the 5S rRNA/L5/L18/L25 subcomplex. Contacts the 5S rRNA and the P site tRNA. Forms a bridge to the 30S subunit in the 70S ribosome.

Its function is as follows. This is one of the proteins that bind and probably mediate the attachment of the 5S RNA into the large ribosomal subunit, where it forms part of the central protuberance. In the 70S ribosome it contacts protein S13 of the 30S subunit (bridge B1b), connecting the 2 subunits; this bridge is implicated in subunit movement. Contacts the P site tRNA; the 5S rRNA and some of its associated proteins might help stabilize positioning of ribosome-bound tRNAs. In Mycoplasma capricolum subsp. capricolum (strain California kid / ATCC 27343 / NCTC 10154), this protein is Large ribosomal subunit protein uL5.